Here is a 1408-residue protein sequence, read N- to C-terminus: ARF guanine-nucleotide exchange factor 1 (1408 aa).

The residue at position 49 (Ser49) is a Phosphoserine. A disordered region spans residues 262–287 (TTTSDNDLSSTDDDSAVADDNKNEKP). Positions 552–706 (FNEKAKKGIQ…IIMLNTDSHN (155 aa)) constitute an SEC7 domain.

Interacts (via N-terminal region) with SEC21 (via C-terminus). Interacts with GMH1. Interacts with DRS2.

Its subcellular location is the cytoplasm. It is found in the cytosol. It localises to the membrane. The protein resides in the endoplasmic reticulum. The protein localises to the mitochondrion. In terms of biological role, activates the ARF proteins by exchanging bound GDP for free GTP. Plays a role in maintaining mitochondrial morphology, and in the turnover of mitochondria through mitophagy. The protein is ARF guanine-nucleotide exchange factor 1 (GEA1) of Saccharomyces cerevisiae (strain ATCC 204508 / S288c) (Baker's yeast).